We begin with the raw amino-acid sequence, 492 residues long: Probable cytochrome P450 313a1 (492 aa).

Cys438 serves as a coordination point for heme.

This sequence belongs to the cytochrome P450 family. It depends on heme as a cofactor.

The protein resides in the endoplasmic reticulum membrane. Its subcellular location is the microsome membrane. Functionally, may be involved in the metabolism of insect hormones and in the breakdown of synthetic insecticides. In Drosophila melanogaster (Fruit fly), this protein is Probable cytochrome P450 313a1 (Cyp313a1).